The following is a 441-amino-acid chain: Cysteine--tRNA ligase (441 aa).

Cys-24 is a binding site for Zn(2+). Positions 26–36 (PTIYDYIHIGN) match the 'HIGH' region motif. Zn(2+)-binding residues include Cys-204, His-230, and Glu-234. The 'KMSKS' region motif lies at 262-266 (KMSKS). ATP is bound at residue Lys-265.

Belongs to the class-I aminoacyl-tRNA synthetase family. Monomer. Zn(2+) serves as cofactor.

Its subcellular location is the cytoplasm. It carries out the reaction tRNA(Cys) + L-cysteine + ATP = L-cysteinyl-tRNA(Cys) + AMP + diphosphate. In Mesoplasma florum (strain ATCC 33453 / NBRC 100688 / NCTC 11704 / L1) (Acholeplasma florum), this protein is Cysteine--tRNA ligase.